A 272-amino-acid polypeptide reads, in one-letter code: Putative phosphoenolpyruvate synthase regulatory protein (272 aa).

152 to 159 (GVSRCGKT) is an ADP binding site.

This sequence belongs to the pyruvate, phosphate/water dikinase regulatory protein family. PSRP subfamily.

It carries out the reaction [pyruvate, water dikinase] + ADP = [pyruvate, water dikinase]-phosphate + AMP + H(+). The catalysed reaction is [pyruvate, water dikinase]-phosphate + phosphate + H(+) = [pyruvate, water dikinase] + diphosphate. Functionally, bifunctional serine/threonine kinase and phosphorylase involved in the regulation of the phosphoenolpyruvate synthase (PEPS) by catalyzing its phosphorylation/dephosphorylation. In Pseudomonas fluorescens (strain SBW25), this protein is Putative phosphoenolpyruvate synthase regulatory protein.